We begin with the raw amino-acid sequence, 125 residues long: Scinderin (125 aa).

Tyr13 carries the phosphotyrosine modification. A 1,2-diacyl-sn-glycero-3-phospho-(1D-myo-inositol-4,5-bisphosphate) contacts are provided by residues 23–30 (KGGLKYKA) and 49–57 (RLLHVKGRR). A Gelsolin-like 1 repeat occupies 59-99 (VRATEVPLSWDSFNKGDCFIIDLGSEIYQWFGSSCNKYERL).

This sequence belongs to the villin/gelsolin family.

It localises to the cytoplasm. The protein localises to the cytoskeleton. It is found in the cell projection. The protein resides in the podosome. Ca(2+)-dependent actin filament-severing protein that has a regulatory function in exocytosis by affecting the organization of the microfilament network underneath the plasma membrane. In vitro, also has barbed end capping and nucleating activities in the presence of Ca(2+). Severing activity is inhibited by phosphatidylinositol 4,5-bis-phosphate (PIP2). Required for megakaryocyte differentiation, maturation, polyploidization and apoptosis with the release of platelet-like particles. Plays a role in osteoclastogenesis (OCG) and actin cytoskeletal organization in osteoclasts. Regulates chondrocyte proliferation and differentiation. Inhibits cell proliferation and tumorigenesis. Signaling is mediated by MAPK, p38 and JNK pathways. This is Scinderin (SCIN) from Sus scrofa (Pig).